The sequence spans 151 residues: UPF0178 protein YaiI (151 aa).

It belongs to the UPF0178 family.

This is UPF0178 protein YaiI from Salmonella paratyphi B (strain ATCC BAA-1250 / SPB7).